A 296-amino-acid chain; its full sequence is Cutinase est1 (296 aa).

A signal peptide spans 1 to 35 (MSVTTPRREASLLSRAVAVAAAAAATVALAAPAQA). The disordered stretch occupies residues 36-57 (ANPYERGPNPTESMLEARSGPF). Y95 serves as a coordination point for poly(ethylene terephthalate). Residue S165 is the Nucleophile of the active site. M166 and W190 together coordinate poly(ethylene terephthalate). Catalysis depends on charge relay system residues D211 and H243. A disulfide bridge links C276 with C294.

It belongs to the AB hydrolase superfamily. As to quaternary structure, monomer.

It is found in the secreted. Its subcellular location is the periplasm. The catalysed reaction is (ethylene terephthalate)(n) + H2O = (ethylene terephthalate)(n-1) + 4-[(2-hydroxyethoxy)carbonyl]benzoate + H(+). It catalyses the reaction a butanoate ester + H2O = an aliphatic alcohol + butanoate + H(+). The enzyme catalyses cutin + H2O = cutin monomers.. Functionally, catalyzes the hydrolysis of cutin, a polyester that forms the structure of plant cuticle. Shows esterase activity towards p-nitrophenol-linked aliphatic esters (pNP-aliphatic esters). Capable of degrading the plastic poly(ethylene terephthalate) (PET), the most abundant polyester plastic in the world. Can also depolymerize the synthetic polyester poly(epsilon-caprolactone) (PCL). This chain is Cutinase est1, found in Thermobifida alba (Thermomonospora alba).